A 313-amino-acid polypeptide reads, in one-letter code: 2,3-dihydroxyphenylpropionate/2,3-dihydroxicinnamic acid 1,2-dioxygenase (313 aa).

The Proton donor role is filled by His-115. Residue His-179 is the Proton acceptor of the active site.

This sequence belongs to the LigB/MhpB extradiol dioxygenase family. As to quaternary structure, homotetramer. The cofactor is Fe(2+).

It catalyses the reaction 3-(2,3-dihydroxyphenyl)propanoate + O2 = (2Z,4E)-2-hydroxy-6-oxonona-2,4-dienedioate + H(+). It carries out the reaction (2E)-3-(2,3-dihydroxyphenyl)prop-2-enoate + O2 = (2Z,4E,7E)-2-hydroxy-6-oxonona-2,4,7-trienedioate + H(+). It participates in aromatic compound metabolism; 3-phenylpropanoate degradation. In terms of biological role, catalyzes the non-heme iron(II)-dependent oxidative cleavage of 2,3-dihydroxyphenylpropionic acid and 2,3-dihydroxicinnamic acid into 2-hydroxy-6-ketononadienedioate and 2-hydroxy-6-ketononatrienedioate, respectively. The chain is 2,3-dihydroxyphenylpropionate/2,3-dihydroxicinnamic acid 1,2-dioxygenase from Mycobacterium ulcerans (strain Agy99).